The chain runs to 366 residues: Chorismate synthase (366 aa).

NADP(+) is bound by residues Arg48 and Arg54. Residues 125–127 (RSS), 238–239 (NA), Gly278, 293–297 (KPTSS), and Arg319 contribute to the FMN site.

Belongs to the chorismate synthase family. Homotetramer. FMNH2 is required as a cofactor.

It carries out the reaction 5-O-(1-carboxyvinyl)-3-phosphoshikimate = chorismate + phosphate. It participates in metabolic intermediate biosynthesis; chorismate biosynthesis; chorismate from D-erythrose 4-phosphate and phosphoenolpyruvate: step 7/7. Catalyzes the anti-1,4-elimination of the C-3 phosphate and the C-6 proR hydrogen from 5-enolpyruvylshikimate-3-phosphate (EPSP) to yield chorismate, which is the branch point compound that serves as the starting substrate for the three terminal pathways of aromatic amino acid biosynthesis. This reaction introduces a second double bond into the aromatic ring system. This Burkholderia ambifaria (strain MC40-6) protein is Chorismate synthase.